A 246-amino-acid polypeptide reads, in one-letter code: Peroxisomal membrane protein 11A (246 aa).

Residues 1–93 (MDAFIRVANQ…LCLTLANLNR (93 aa)) are Cytoplasmic-facing. The chain crosses the membrane as a helical span at residues 94 to 114 (VVYYICDTVLWAKSVGLTSGV). Over 115–217 (NREKWQRWAA…LNQLGIYKSN (103 aa)) the chain is Lumenal. The chain crosses the membrane as a helical span at residues 218 to 238 (LGVVGLGGLISSLAGLLTVVY). The tract at residues 218–238 (LGVVGLGGLISSLAGLLTVVY) is required for homodimerization, interaction with PEX11G, and peroxisomal localization. The Cytoplasmic portion of the chain corresponds to 239–246 (PQLKLKAR).

It belongs to the peroxin-11 family. As to quaternary structure, homodimer. Heterodimer with PEX11G. Probably interacts with COPB2 and COPA. Interacts with PEX19. Interacts with FIS1. Strongly expressed in liver and at lower levels in heart, brain, kidney and testis.

It is found in the peroxisome membrane. In terms of biological role, may be involved in peroxisomal proliferation and may regulate peroxisomes division. May mediate binding of coatomer proteins to the peroxisomal membrane. Promotes membrane protrusion and elongation on the peroxisomal surface. This Mus musculus (Mouse) protein is Peroxisomal membrane protein 11A (Pex11a).